We begin with the raw amino-acid sequence, 263 residues long: Small ribosomal subunit protein eS1 (263 aa).

Residues 236–254 (GDGKGGSDEPGARVDRPEG) show a composition bias toward basic and acidic residues. A disordered region spans residues 236-263 (GDGKGGSDEPGARVDRPEGYEPPVQETV).

Belongs to the eukaryotic ribosomal protein eS1 family. As to quaternary structure, component of the small ribosomal subunit. Mature ribosomes consist of a small (40S) and a large (60S) subunit. The 40S subunit contains about 33 different proteins and 1 molecule of RNA (18S). The 60S subunit contains about 49 different proteins and 3 molecules of RNA (28S, 5.8S and 5S).

The protein resides in the cytoplasm. This chain is Small ribosomal subunit protein eS1, found in Periplaneta americana (American cockroach).